Consider the following 274-residue polypeptide: 2,3,4,5-tetrahydropyridine-2,6-dicarboxylate N-succinyltransferase (274 aa).

Residues R104 and D141 each coordinate substrate.

It belongs to the transferase hexapeptide repeat family. Homotrimer.

The protein resides in the cytoplasm. The catalysed reaction is (S)-2,3,4,5-tetrahydrodipicolinate + succinyl-CoA + H2O = (S)-2-succinylamino-6-oxoheptanedioate + CoA. The protein operates within amino-acid biosynthesis; L-lysine biosynthesis via DAP pathway; LL-2,6-diaminopimelate from (S)-tetrahydrodipicolinate (succinylase route): step 1/3. The sequence is that of 2,3,4,5-tetrahydropyridine-2,6-dicarboxylate N-succinyltransferase from Shewanella loihica (strain ATCC BAA-1088 / PV-4).